A 608-amino-acid chain; its full sequence is Signal transduction histidine-protein kinase AtoS (608 aa).

The Cytoplasmic segment spans residues 1 to 15; it reads MHYMKWIYPRRLRNQ. Residues 16–36 traverse the membrane as a helical segment; sequence MILMAILMVIVPTLTIGYIVE. Residues 37-189 are Periplasmic-facing; that stretch reads TEGRSAVLSE…DIRRQAWKMD (153 aa). Residues 190–210 traverse the membrane as a helical segment; the sequence is VRIIIVLTAGLLISLLLIVLF. Topologically, residues 211–608 are cytoplasmic; that stretch reads SRRLSANIDI…PINPQGNQTV (398 aa). Residues 212 to 262 enclose the HAMP domain; that stretch reads RRLSANIDIITDGLSTLAQNIPTRLPQLPGEMGQISQSVNNLAQALRETRT. A PAS domain is found at 260–305; that stretch reads TRTLNDLIIENAADGVIAIDRQGDVTTMNPAAEVITGYQRHELVGQ. A PAC domain is found at 326–382; sequence HGTEHVALEISFPGRDRTIELSVTTSRIHNTHGEMIGALVIFSDLTARKETQRRMAQ. Residues 395–602 form the Histidine kinase domain; the sequence is GVAHEVRNPL…TFTLILPINP (208 aa). At histidine 398 the chain carries Phosphohistidine; by autocatalysis.

Homodimer. Autophosphorylated. Each AtoS molecule may phosphorylate its partner within the dimer rather than phosphorylating itself.

The protein localises to the cell inner membrane. The enzyme catalyses ATP + protein L-histidine = ADP + protein N-phospho-L-histidine.. Member of the two-component regulatory system AtoS/AtoC. In the presence of acetoacetate, AtoS/AtoC stimulates the expression of the atoDAEB operon, leading to short chain fatty acid catabolism and activation of the poly-(R)-3-hydroxybutyrate (cPHB) biosynthetic pathway. Also induces the operon in response to spermidine. Involved in the regulation of motility and chemotaxis, via transcriptional induction of the flagellar regulon. AtoS is a membrane-associated kinase that phosphorylates and activates AtoC in response to environmental signals. This chain is Signal transduction histidine-protein kinase AtoS (atoS), found in Escherichia coli (strain K12).